The primary structure comprises 130 residues: Large ribosomal subunit protein bL20 (130 aa).

Belongs to the bacterial ribosomal protein bL20 family.

In terms of biological role, binds directly to 23S ribosomal RNA and is necessary for the in vitro assembly process of the 50S ribosomal subunit. It is not involved in the protein synthesizing functions of that subunit. This is Large ribosomal subunit protein bL20 from Nocardioides sp. (strain ATCC BAA-499 / JS614).